The primary structure comprises 485 residues: N-succinylglutamate 5-semialdehyde dehydrogenase (485 aa).

Position 220–225 (220–225) interacts with NAD(+); that stretch reads GSANTG. Residues Glu243 and Cys278 contribute to the active site.

This sequence belongs to the aldehyde dehydrogenase family. AstD subfamily.

It carries out the reaction N-succinyl-L-glutamate 5-semialdehyde + NAD(+) + H2O = N-succinyl-L-glutamate + NADH + 2 H(+). It functions in the pathway amino-acid degradation; L-arginine degradation via AST pathway; L-glutamate and succinate from L-arginine: step 4/5. In terms of biological role, catalyzes the NAD-dependent reduction of succinylglutamate semialdehyde into succinylglutamate. The polypeptide is N-succinylglutamate 5-semialdehyde dehydrogenase (Vibrio cholerae serotype O1 (strain M66-2)).